Here is a 1239-residue protein sequence, read N- to C-terminus: MARAKLPRSPSEGKAGPGDTPAGSAAPEEPHGLSPLLPTRGGGSVGSDVGQRLHVEDFSLDSSLSQVQVEFYVNENTFKERLKLFFIKNQRSSLRIRLFNFSLKLLTCLLYIVRVLLDNPDQGIGCWGCTKYNYTFNGSSSEFHWAPILWVERKMALWVIQVIVATISFLETMLLIYLSYKGNIWEQIFHVSFVLEMINTLPFIITVFWPPLRNLFIPVFLNCWLAKHALENMINDFHRAILRTQSAMFNQVLILFCTLLCLVFTGTCGIQHLERAGGNLNLLTSFYFCIVTFSTVGFGDVTPKIWPSQLLVVILICVTLVVLPLQFEELVYLWMERQKSGGNYSRHRARTEKHVVLCVSSLKIDLLMDFLNEFYAHPRLQDYYVVILCPSEMDVQVRRVLQIPLWSQRVIYLQGSALKDQDLMRAKMDNGEACFILSSRNEVDRTAADHQTILRAWAVKDFAPNCPLYVQILKPENKFHVKFADHVVCEEECKYAMLALNCICPATSTLITLLVHTSRGQEGQESPEQWQRMYGRCSGNEVYHIRMGDSKFFREYEGKSFTYAAFHAHKKYGVCLIGLKREENKSILLNPGPRHILAASDTCFYINITKEENSAFIFKQEEKQKRRGLAGQALYEGPSRLPVHSIIASMGTVAMDLQNTDCRPSQGGSGGGGGKLTLPTENGSGSRRPSIAPVLELADSSALLPCDLLSDQSEDEVTPSDDEGLSVVEYVKGYPPNSPYIGSSPTLCHLLPVKAPFCCLRLDKGCKHNSYEDAKAYGFKNKLIIVSAETAGNGLYNFIVPLRAYYRSRRELNPIVLLLDNKPDHHFLEAICCFPMVYYMEGSVDNLDSLLQCGIIYADNLVVVDKESTMSAEEDYMADAKTIVNVQTMFRLFPSLSITTELTHPSNMRFMQFRAKDSYSLALSKLEKQERENGSNLAFMFRLPFAAGRVFSISMLDTLLYQSFVKDYMITITRLLLGLDTTPGSGYLCAMKVTEDDLWIRTYGRLFQKLCSSSAEIPIGIYRTECHVFSSEPHDLRAQSQISVNMEDCEDTREAKGPWGTRAASGGGSTHGRHGGSADPVEHPLLRRKSLQWARKLSRKSSKQAGKAPMTTDWITQQRLSLYRRSERQELSELVKNRMKHLGLPTTGYEDVANLTASDVMNRVNLGYLQDEMNDHHQNTLSYVLINPPPDTRLEPNDIVYLIRSDPLAHVTSSSQSRKSSCSNKLSSCNPETRDETQL.

Residues Met1–Val45 form a disordered region. At Met1–Ser93 the chain is on the cytoplasmic side. A helical membrane pass occupies residues Leu94–Cys126. Over Trp127 to Arg153 the chain is Extracellular. N-linked (GlcNAc...) asparagine glycosylation is found at Asn133 and Asn137. A helical transmembrane segment spans residues Lys154–Leu178. At Ser179–Ser192 the chain is on the cytoplasmic side. Residues Phe193–Phe208 traverse the membrane as a helical segment. Residues Trp209–Leu215 are Extracellular-facing. A helical transmembrane segment spans residues Phe216–Met233. Topologically, residues Ile234–Ser246 are cytoplasmic. Residues Ala247 to Glu274 traverse the membrane as a helical segment. The Extracellular portion of the chain corresponds to Arg275 to Asn281. The pore-forming intramembrane region spans Leu282–Thr302. Positions 296 and 297 each coordinate K(+). The Extracellular portion of the chain corresponds to Pro303–Lys304. The helical transmembrane segment at Ile305 to Gln338 threads the bilayer. Topologically, residues Lys339–Leu1239 are cytoplasmic. An RCK N-terminal 1 domain is found at Glu352 to Val488. Leu513, His516, Ser538, and Asn540 together coordinate Na(+). Positions Gln658–Pro689 are disordered. Zn(2+)-binding residues include Cys758 and Cys759. Residues Arg761 and Lys764 each contribute to the K(+) site. Na(+)-binding residues include Arg761 and Lys764. Cys766 and His768 together coordinate Zn(2+). Residues Asn769, Tyr771, Tyr777, and Gly778 each contribute to the K(+) site. Residue Tyr771 coordinates Na(+). Phe779 provides a ligand contact to Na(+). The 141-residue stretch at Asn781–Leu921 folds into the RCK N-terminal 2 domain. K(+) contacts are provided by Ser787, Leu818, Asp820, Gly842, and Asp865. Disordered stretches follow at residues Arg1053 to Val1081 and Thr1212 to Leu1239. Over residues Ser1213–Asn1230 the composition is skewed to low complexity.

The protein belongs to the potassium channel family. Calcium-activated (TC 1.A.1.3) subfamily. KCa4.1/KCNT1 sub-subfamily. In terms of assembly, homotetramer; which constitutes the Na(+)-activated K(+) channel. Interacts with KCNT2; these heterodimer channels differ from the homomers in their unitary conductance, kinetic behavior, subcellular localization, and response to activation of protein kinase C. Interacts (via C-terminus) with FMR1; this interaction alters gating properties of KCNT1. Interacts with CRBN via its cytoplasmic C-terminus. As to quaternary structure, does not interact with KCNT2. Phosphorylated by protein kinase C. Phosphorylation of the C-terminal domain increases channel activity. Detected in brain and brainstem, in vestibular and oculomotor nuclei, the medial nucleus of the trapezoid in the auditory system, in olfactory bulb, red nucleus, and deep cerebellar nuclei. Detected in thalamus, substantia nigra, and amygdala (at protein level). Highly expressed in the brain and kidney.

Its subcellular location is the cell membrane. The enzyme catalyses K(+)(in) = K(+)(out). With respect to regulation, activated by high intracellular Na(+) level. In addition to activation by Na(+), is cooperatively activated by intracellular Cl(-) levels. Activated upon stimulation of G-protein coupled receptors, such as CHRM1 and GRIA1. Sodium-activated K(+) channel. Acts as an important mediator of neuronal membrane excitability. Contributes to the delayed outward currents. Regulates neuronal bursting in sensory neurons. Contributes to synaptic development and plasticity. This is Potassium channel subfamily T member 1 (Kcnt1) from Rattus norvegicus (Rat).